A 318-amino-acid polypeptide reads, in one-letter code: MIEIWTEKYRPKSLSEIYGEDENIQKLKSFVEKKELPHLLFAGSVGTGKTSTAIALAIELFGESWKENFIEMNASNENGIDVIRNKIKDIARIRPSNPLGFKILFLDEADQLTAEAQAALRRTMEMYSETTRFVFACNYSSKIIPPIQSRTVVMRFRPVQDEFIKKKLNEIAKNEGFTIDDESMEAMVEVSGGDMRKAINVLQAVYTSGEISPKKIYEIIGYASPESVNKLISRAINGLFDEARQIVDKMMIEDGLSGIDIVKSVHSIVRASVVPPKQKIEIIKALADAEFRIVEGSNDRIQLDALIARIADIGSKIN.

Residue G43–T50 participates in ATP binding.

It belongs to the activator 1 small subunits family. RfcS subfamily. In terms of assembly, heteromultimer composed of small subunits (RfcS) and large subunits (RfcL).

Part of the RFC clamp loader complex which loads the PCNA sliding clamp onto DNA. This Thermoplasma volcanium (strain ATCC 51530 / DSM 4299 / JCM 9571 / NBRC 15438 / GSS1) protein is Replication factor C small subunit.